Consider the following 156-residue polypeptide: MTTKKQPDSTIALNRKAGFDYFIEDQYEAGLVLEGWEVKSLRAGKINLSDSHVIIKYGEAFLLGAQIQPLPTASTHFIPDPIRTRKLLMNKKELNHLIGSVERQGYTIVPLSLYWKKNKIKIKIALAKGKKEHDKRDTIKDREWQRDRSRIMKKNT.

Positions 135-150 (KRDTIKDREWQRDRSR) are enriched in basic and acidic residues. The segment at 135–156 (KRDTIKDREWQRDRSRIMKKNT) is disordered.

Belongs to the SmpB family.

The protein resides in the cytoplasm. Functionally, required for rescue of stalled ribosomes mediated by trans-translation. Binds to transfer-messenger RNA (tmRNA), required for stable association of tmRNA with ribosomes. tmRNA and SmpB together mimic tRNA shape, replacing the anticodon stem-loop with SmpB. tmRNA is encoded by the ssrA gene; the 2 termini fold to resemble tRNA(Ala) and it encodes a 'tag peptide', a short internal open reading frame. During trans-translation Ala-aminoacylated tmRNA acts like a tRNA, entering the A-site of stalled ribosomes, displacing the stalled mRNA. The ribosome then switches to translate the ORF on the tmRNA; the nascent peptide is terminated with the 'tag peptide' encoded by the tmRNA and targeted for degradation. The ribosome is freed to recommence translation, which seems to be the essential function of trans-translation. In Legionella pneumophila (strain Corby), this protein is SsrA-binding protein.